A 653-amino-acid chain; its full sequence is Sodium-dependent phosphate transporter 2 (653 aa).

A topological domain (extracellular) is located at residue Met1. A helical membrane pass occupies residues Val2–Phe22. Residues Ser23 to Gln46 lie on the Cytoplasmic side of the membrane. Residues Ala47–Gly67 form a helical membrane-spanning segment. Residues Glu68–Leu86 lie on the Extracellular side of the membrane. N-linked (GlcNAc...) asparagine glycosylation occurs at Asn81. The helical transmembrane segment at Leu87–Phe107 threads the bilayer. The Cytoplasmic portion of the chain corresponds to Leu108–Arg109. The chain crosses the membrane as a helical span at residues Leu110 to Ile130. Topologically, residues Gly131 to Lys142 are extracellular. Residues Ile143–Leu163 form a helical membrane-spanning segment. The Cytoplasmic portion of the chain corresponds to Met164–Tyr187. Residues Ala188 to Leu208 traverse the membrane as a helical segment. At Glu209 to Ala217 the chain is on the extracellular side. The chain crosses the membrane as a helical span at residues Leu218–Trp238. Residues Met239 to Glu483 lie on the Cytoplasmic side of the membrane. Residues Val484–Gly504 traverse the membrane as a helical segment. Over Gly505–Ser532 the chain is Extracellular. Residues Thr533 to Gly553 traverse the membrane as a helical segment. Over Arg554–Gly572 the chain is Cytoplasmic. A helical membrane pass occupies residues Phe573–Ser587. Topologically, residues Asn588–Ser594 are extracellular. The helical transmembrane segment at Thr595–Arg610 threads the bilayer. Residues Ser611–Asn622 are Cytoplasmic-facing. A helical membrane pass occupies residues Ile623–Ala643. The Extracellular segment spans residues Ile644–Val653.

Belongs to the inorganic phosphate transporter (PiT) (TC 2.A.20) family. Homodimer.

It localises to the cell membrane. Its subcellular location is the apical cell membrane. It carries out the reaction 2 Na(+)(out) + phosphate(out) = 2 Na(+)(in) + phosphate(in). Functionally, sodium-phosphate symporter which preferentially transports the monovalent form of phosphate with a stoichiometry of two sodium ions per phosphate ion. The chain is Sodium-dependent phosphate transporter 2 (slc20a2) from Xenopus tropicalis (Western clawed frog).